The sequence spans 311 residues: Aspartate carbamoyltransferase catalytic subunit (311 aa).

Positions 55 and 56 each coordinate carbamoyl phosphate. L-aspartate is bound at residue lysine 85. 3 residues coordinate carbamoyl phosphate: arginine 106, histidine 135, and glutamine 138. Arginine 168 and arginine 230 together coordinate L-aspartate. 2 residues coordinate carbamoyl phosphate: leucine 268 and proline 269.

This sequence belongs to the aspartate/ornithine carbamoyltransferase superfamily. ATCase family. Heterododecamer (2C3:3R2) of six catalytic PyrB chains organized as two trimers (C3), and six regulatory PyrI chains organized as three dimers (R2).

The catalysed reaction is carbamoyl phosphate + L-aspartate = N-carbamoyl-L-aspartate + phosphate + H(+). It functions in the pathway pyrimidine metabolism; UMP biosynthesis via de novo pathway; (S)-dihydroorotate from bicarbonate: step 2/3. Catalyzes the condensation of carbamoyl phosphate and aspartate to form carbamoyl aspartate and inorganic phosphate, the committed step in the de novo pyrimidine nucleotide biosynthesis pathway. The polypeptide is Aspartate carbamoyltransferase catalytic subunit (Salmonella paratyphi A (strain AKU_12601)).